The primary structure comprises 122 residues: Small ribosomal subunit protein bS6 (122 aa).

It belongs to the bacterial ribosomal protein bS6 family.

Binds together with bS18 to 16S ribosomal RNA. This Neisseria gonorrhoeae (strain ATCC 700825 / FA 1090) protein is Small ribosomal subunit protein bS6.